Consider the following 223-residue polypeptide: Probable glutathione S-transferase (223 aa).

One can recognise a GST N-terminal domain in the interval 2–81 (AEVKLLGFWY…YIDETFEGPS (80 aa)). Glutathione contacts are provided by residues Ser12, Lys39, Val53, and 65 to 66 (ES). The 127-residue stretch at 86–212 (DPYDRALARF…ELLAFFRARF (127 aa)) folds into the GST C-terminal domain.

Belongs to the GST superfamily. HSP26 family. In terms of tissue distribution, root tip-specific expression.

The catalysed reaction is RX + glutathione = an S-substituted glutathione + a halide anion + H(+). The polypeptide is Probable glutathione S-transferase (Nicotiana tabacum (Common tobacco)).